Here is a 401-residue protein sequence, read N- to C-terminus: Arylacetamide deacetylase-like 2 (401 aa).

Residues 1–18 (MGLKALCLGLLCVLFVSH) form the signal peptide. The short motif at 111 to 113 (HGG) is the Involved in the stabilization of the negatively charged intermediate by the formation of the oxyanion hole element. The cysteines at positions 116 and 338 are disulfide-linked. Active-site residues include Ser-189, Asp-341, and His-371.

The protein belongs to the 'GDXG' lipolytic enzyme family.

The protein localises to the secreted. This chain is Arylacetamide deacetylase-like 2 (AADACL2), found in Homo sapiens (Human).